An 83-amino-acid polypeptide reads, in one-letter code: Small ribosomal subunit protein bS20 (83 aa).

This sequence belongs to the bacterial ribosomal protein bS20 family.

Functionally, binds directly to 16S ribosomal RNA. In Lactobacillus delbrueckii subsp. bulgaricus (strain ATCC 11842 / DSM 20081 / BCRC 10696 / JCM 1002 / NBRC 13953 / NCIMB 11778 / NCTC 12712 / WDCM 00102 / Lb 14), this protein is Small ribosomal subunit protein bS20.